A 302-amino-acid chain; its full sequence is tRNA-cytidine(32) 2-sulfurtransferase (302 aa).

Residues 57–62 (SGGKDS) carry the PP-loop motif motif. [4Fe-4S] cluster is bound by residues C132, C135, and C223.

Belongs to the TtcA family. Homodimer. Requires Mg(2+) as cofactor. [4Fe-4S] cluster serves as cofactor.

The protein localises to the cytoplasm. The catalysed reaction is cytidine(32) in tRNA + S-sulfanyl-L-cysteinyl-[cysteine desulfurase] + AH2 + ATP = 2-thiocytidine(32) in tRNA + L-cysteinyl-[cysteine desulfurase] + A + AMP + diphosphate + H(+). It participates in tRNA modification. In terms of biological role, catalyzes the ATP-dependent 2-thiolation of cytidine in position 32 of tRNA, to form 2-thiocytidine (s(2)C32). The sulfur atoms are provided by the cysteine/cysteine desulfurase (IscS) system. This is tRNA-cytidine(32) 2-sulfurtransferase from Marinobacter nauticus (strain ATCC 700491 / DSM 11845 / VT8) (Marinobacter aquaeolei).